The primary structure comprises 336 residues: Foldase protein PrsA (336 aa).

The first 22 residues, 1-22, serve as a signal peptide directing secretion; the sequence is MKSAKKLLSVLCLGIFILTFTA. The N-palmitoyl cysteine moiety is linked to residue C23. A lipid anchor (S-diacylglycerol cysteine) is attached at C23. The 93-residue stretch at 194 to 286 folds into the PpiC domain; the sequence is PNTMNVSHIL…WGYHIIKINS (93 aa).

Belongs to the PrsA family.

Its subcellular location is the cell membrane. The catalysed reaction is [protein]-peptidylproline (omega=180) = [protein]-peptidylproline (omega=0). Functionally, plays a major role in protein secretion by helping the post-translocational extracellular folding of several secreted proteins. This chain is Foldase protein PrsA, found in Clostridium botulinum (strain Langeland / NCTC 10281 / Type F).